The primary structure comprises 183 residues: V-type ATP synthase subunit E (183 aa).

This sequence belongs to the V-ATPase E subunit family.

Produces ATP from ADP in the presence of a proton gradient across the membrane. The protein is V-type ATP synthase subunit E of Fusobacterium nucleatum subsp. nucleatum (strain ATCC 25586 / DSM 15643 / BCRC 10681 / CIP 101130 / JCM 8532 / KCTC 2640 / LMG 13131 / VPI 4355).